A 191-amino-acid chain; its full sequence is Lipid A acyltransferase PagP (191 aa).

A signal peptide spans 1–23 (MRLFYQRISLLISLCGFFSAAWA). Residues His-62, Asp-105, and Ser-106 contribute to the active site.

The protein belongs to the lipid A palmitoyltransferase family. In terms of assembly, homodimer.

Its subcellular location is the cell outer membrane. It catalyses the reaction a lipid A + a 1,2-diacyl-sn-glycero-3-phosphocholine = a hepta-acyl lipid A + a 2-acyl-sn-glycero-3-phosphocholine. The enzyme catalyses a lipid IVA + a 1,2-diacyl-sn-glycero-3-phosphocholine = a lipid IVB + a 2-acyl-sn-glycero-3-phosphocholine. The catalysed reaction is a lipid IIA + a 1,2-diacyl-sn-glycero-3-phosphocholine = a lipid IIB + a 2-acyl-sn-glycero-3-phosphocholine. In terms of biological role, transfers a fatty acid residue from the sn-1 position of a phospholipid to the N-linked hydroxyfatty acid chain on the proximal unit of lipid A or its precursors. The chain is Lipid A acyltransferase PagP from Sodalis glossinidius (strain morsitans).